Reading from the N-terminus, the 864-residue chain is Alpha-glucosidase (864 aa).

Positions 1 to 22 (MAKVSFIFVAIALITGNVLCQT) are cleaved as a signal peptide. 3 N-linked (GlcNAc...) asparagine glycosylation sites follow: Asn187, Asn364, and Asn406. The Nucleophile role is filled by Asp430. Glu433 is an active-site residue. Asn466 and Asn500 each carry an N-linked (GlcNAc...) asparagine glycan. The active-site Proton donor is Asp567. Asn568 and Asn734 each carry an N-linked (GlcNAc...) asparagine glycan.

Belongs to the glycosyl hydrolase 31 family.

The catalysed reaction is Hydrolysis of terminal, non-reducing (1-&gt;4)-linked alpha-D-glucose residues with release of alpha-D-glucose.. Hydrolyzes not only malto-oligosaccharides but also soluble starch. The protein is Alpha-glucosidase of Mucor javanicus.